A 167-amino-acid chain; its full sequence is Shikimate kinase (167 aa).

12–17 serves as a coordination point for ATP; that stretch reads GSGKTT. Threonine 16 is a binding site for Mg(2+). Positions 34, 58, and 80 each coordinate substrate. Position 117 (arginine 117) interacts with ATP. Arginine 135 serves as a coordination point for substrate. Residue arginine 152 participates in ATP binding.

The protein belongs to the shikimate kinase family. As to quaternary structure, monomer. Requires Mg(2+) as cofactor.

Its subcellular location is the cytoplasm. The catalysed reaction is shikimate + ATP = 3-phosphoshikimate + ADP + H(+). It functions in the pathway metabolic intermediate biosynthesis; chorismate biosynthesis; chorismate from D-erythrose 4-phosphate and phosphoenolpyruvate: step 5/7. Functionally, catalyzes the specific phosphorylation of the 3-hydroxyl group of shikimic acid using ATP as a cosubstrate. The chain is Shikimate kinase from Salinispora tropica (strain ATCC BAA-916 / DSM 44818 / JCM 13857 / NBRC 105044 / CNB-440).